We begin with the raw amino-acid sequence, 396 residues long: MAKTTKRASSFRRLMIFAIIALISLAFGVRYLFHNSNATDLQKILQNLPKEISQSINSANNIQSSDSDLVQHFESLAQEIRHQQEVQAKQFDKQRKILEKKIQDLKQTPPEATLRERIAMTFPYDSHVKFPAFIWQTWSNDEGPERVQDIKGMWESKNPGFAHEVLNHDVINALVHHYFYSIPEILETYEALPSIILKIDFFKYLILLVHGGVYADIDTFPVQPIPNWIPEELSPSDIGLIVGVEEDAQRADWRTKYIRRLQFGTWIIQAKPGHPVLREIISRIIETTLQRKRDDQLNVNLRNDLNIMSWTGSGLWTDTIFTYFNDFMRSGVREKVTWKLFHNLNQPKLLSDVLVFPKFSFNCPNQIDNDDPHKKFYFITHLASQFWKNTPKVEQK.

Residues 2-13 (AKTTKRASSFRR) lie on the Cytoplasmic side of the membrane. Residues 14 to 34 (LMIFAIIALISLAFGVRYLFH) form a helical; Signal-anchor for type II membrane protein membrane-spanning segment. Over 35-396 (NSNATDLQKI…WKNTPKVEQK (362 aa)) the chain is Lumenal. N-linked (GlcNAc...) asparagine glycosylation is present at Asn-37.

This sequence belongs to the glycosyltransferase 32 family. Component of the M-Pol II complex composed of ANP1, MNN9, MNN10, MNN11 and HOC1.

It is found in the golgi apparatus. Its subcellular location is the cis-Golgi network membrane. In terms of biological role, the M-Pol II complex possesses alpha-1,6-mannosyltransferase activity and is probably involved in the elongation of the mannan backbone of N-linked glycans on cell wall and periplasmic proteins. The polypeptide is Putative glycosyltransferase HOC1 (HOC1) (Saccharomyces cerevisiae (strain ATCC 204508 / S288c) (Baker's yeast)).